The sequence spans 875 residues: Valine--tRNA ligase (875 aa).

The 'HIGH' region signature appears at 45–55; that stretch reads PNVTGVLHMGH. A 'KMSKS' region motif is present at residues 524–528; it reads KMSKS. Residue Lys-527 participates in ATP binding. Residues 803–837 are a coiled coil; that stretch reads VKLLIDKTKELIRLEKQLEKYKMLKISVSKKLENE.

It belongs to the class-I aminoacyl-tRNA synthetase family. ValS type 1 subfamily. As to quaternary structure, monomer.

It localises to the cytoplasm. It catalyses the reaction tRNA(Val) + L-valine + ATP = L-valyl-tRNA(Val) + AMP + diphosphate. In terms of biological role, catalyzes the attachment of valine to tRNA(Val). As ValRS can inadvertently accommodate and process structurally similar amino acids such as threonine, to avoid such errors, it has a 'posttransfer' editing activity that hydrolyzes mischarged Thr-tRNA(Val) in a tRNA-dependent manner. In Borrelia garinii subsp. bavariensis (strain ATCC BAA-2496 / DSM 23469 / PBi) (Borreliella bavariensis), this protein is Valine--tRNA ligase.